Reading from the N-terminus, the 1292-residue chain is Calcium-transporting ATPase 2 (1292 aa).

The disordered stretch occupies residues 1 to 105; it reads MPTYNDDDDS…EQASSKSSTS (105 aa). Residues 1-236 are Cytoplasmic-facing; it reads MPTYNDDDDS…RLMLEAFKDK (236 aa). The span at 23–41 shows a compositional bias: polar residues; sequence KPSSSQFLGVPSSNYNQRE. Residues 44–60 are compositionally biased toward low complexity; it reads SRSGSSTISREPSSSGT. Positions 68–78 are enriched in basic and acidic residues; it reads DSMKESYDKNK. The helical transmembrane segment at 237-257 threads the bilayer; the sequence is VLILLSIAAVVSLALGLYQTF. Over 258–273 the chain is Vacuolar; it reads GQPPTLDPITGKPEPR. A helical transmembrane segment spans residues 274 to 294; that stretch reads VEWVEGVAIMAAIVIVVTVGG. Residues 295–448 are Cytoplasmic-facing; sequence VNDWQKELQF…QLRLSRVADA (154 aa). Residues 449–469 form a helical membrane-spanning segment; it reads IAKLGGAASALLFIVLLIEFL. At 470–488 the chain is on the vacuolar side; it reads VRLKSNDSSSKNKGQEFLQ. A helical transmembrane segment spans residues 489–509; it reads ILIVSVTLLVVAVPEGLPLAV. Ca(2+)-binding residues include Val-498 and Glu-503. The Cytoplasmic portion of the chain corresponds to 510 to 938; it reads TLALAFATNR…GRTVNDAVKK (429 aa). The active-site 4-aspartylphosphate intermediate is Asp-545. Residues Asp-545 and Thr-547 each contribute to the Mg(2+) site. Residues Thr-547, Glu-638, Lys-691, Arg-736, 807–809, Arg-856, and Lys-862 each bind ATP; that span reads TGD. A Mg(2+)-binding site is contributed by Asp-881. Residue Asn-884 participates in ATP binding. Residues 939–959 traverse the membrane as a helical segment; sequence FLQFQITVNITAVFLTIISAV. Residue Asn-947 participates in Ca(2+) binding. At 960–966 the chain is on the vacuolar side; sequence ASTDQSS. The helical transmembrane segment at 967–987 threads the bilayer; it reads VLTAVQLLWVNLIMDTLAALA. Asn-977 and Asp-981 together coordinate Ca(2+). Over 988–1016 the chain is Cytoplasmic; the sequence is LATDPPTPEVLKRKPEKPGASLFTFDMWK. The chain crosses the membrane as a helical span at residues 1017 to 1037; sequence MIICQSMYQLAVTLVLHFAGN. At 1038–1084 the chain is on the vacuolar side; that stretch reads SIFHYPSNTADMNTIVFNTFVWLQLFNEINNRRLDNKLNIFERINHN. The chain crosses the membrane as a helical span at residues 1085–1105; the sequence is FLFIAIFVIVAGIQVIIVFFG. Residues 1106-1115 are Cytoplasmic-facing; sequence GAAFSVKRID. A helical membrane pass occupies residues 1116–1136; sequence GKGWAISIVFGVISIPLGALI. Topologically, residues 1137–1292 are vacuolar; it reads RCVPNNFLRK…ALDKKSSNVH (156 aa).

This sequence belongs to the cation transport ATPase (P-type) (TC 3.A.3) family.

The protein resides in the vacuole membrane. The catalysed reaction is Ca(2+)(in) + ATP + H2O = Ca(2+)(out) + ADP + phosphate + H(+). In terms of biological role, this magnesium-dependent enzyme catalyzes the hydrolysis of ATP coupled with the transport of calcium. Transports the calcium to the vacuole and participates in the control of the cytosolic free calcium. This chain is Calcium-transporting ATPase 2 (pmc1), found in Schizosaccharomyces pombe (strain 972 / ATCC 24843) (Fission yeast).